Consider the following 444-residue polypeptide: Tol-Pal system protein TolB (444 aa).

An N-terminal signal peptide occupies residues 1-19 (MRNIIYFILSLLFSVTSYA).

Belongs to the TolB family. In terms of assembly, the Tol-Pal system is composed of five core proteins: the inner membrane proteins TolA, TolQ and TolR, the periplasmic protein TolB and the outer membrane protein Pal. They form a network linking the inner and outer membranes and the peptidoglycan layer.

Its subcellular location is the periplasm. Part of the Tol-Pal system, which plays a role in outer membrane invagination during cell division and is important for maintaining outer membrane integrity. This is Tol-Pal system protein TolB from Rickettsia rickettsii (strain Sheila Smith).